The sequence spans 150 residues: Flagellar assembly factor FliW (150 aa).

The protein belongs to the FliW family. As to quaternary structure, interacts with translational regulator CsrA and flagellin(s).

The protein resides in the cytoplasm. In terms of biological role, acts as an anti-CsrA protein, binds CsrA and prevents it from repressing translation of its target genes, one of which is flagellin. Binds to flagellin and participates in the assembly of the flagellum. This is Flagellar assembly factor FliW from Thermoanaerobacter pseudethanolicus (strain ATCC 33223 / 39E) (Clostridium thermohydrosulfuricum).